Here is a 536-residue protein sequence, read N- to C-terminus: 2-isopropylmalate synthase (536 aa).

In terms of domain architecture, Pyruvate carboxyltransferase spans 8–269; sequence IIIFDTTLRD…YYNPFLGRPV (262 aa). The Mn(2+) site is built by aspartate 17, histidine 208, histidine 210, and asparagine 244. The segment at 408-536 is regulatory domain; sequence RLELVQVSCG…KEKAAVTSAS (129 aa).

This sequence belongs to the alpha-IPM synthase/homocitrate synthase family. LeuA type 1 subfamily. Homodimer. Requires Mn(2+) as cofactor.

It localises to the cytoplasm. It carries out the reaction 3-methyl-2-oxobutanoate + acetyl-CoA + H2O = (2S)-2-isopropylmalate + CoA + H(+). It functions in the pathway amino-acid biosynthesis; L-leucine biosynthesis; L-leucine from 3-methyl-2-oxobutanoate: step 1/4. Catalyzes the condensation of the acetyl group of acetyl-CoA with 3-methyl-2-oxobutanoate (2-ketoisovalerate) to form 3-carboxy-3-hydroxy-4-methylpentanoate (2-isopropylmalate). The protein is 2-isopropylmalate synthase of Gloeothece citriformis (strain PCC 7424) (Cyanothece sp. (strain PCC 7424)).